A 1118-amino-acid polypeptide reads, in one-letter code: uncharacterized protein (1118 aa).

Disordered regions lie at residues 1-69 (MESG…NGED), 1044-1071 (PKSV…EKID), and 1090-1118 (IRPT…SFEL). The segment covering 13–34 (DMVEEDNDEDSFEEPACEDSFD) has biased composition (acidic residues). The segment covering 35–60 (SQEASSKANEPQNDSFDEPIQSSVSK) has biased composition (polar residues). The segment covering 1107–1118 (EDSDDLEDSFEL) has biased composition (acidic residues).

This is an uncharacterized protein from Caenorhabditis elegans.